The chain runs to 122 residues: Copper metallothionein 1 (122 aa).

The cys-rich copper-binding 1 stretch occupies residues 1-35 (MACNCPPQKNTACCSTSEAQDKCTCQKGNCECKAC). The spacer B1 stretch occupies residues 36-50 (PNSTKTSESGGKAST). The segment at 51–72 (CNCGGSGEACTCPPGQCACDKC) is cys-rich copper-binding 2. Residues 73–81 (PKKAKSVST) form a spacer B2 region. A cys-rich copper-binding 3 region spans residues 82–103 (CGCGGSGAACSCPPGKCACDNC). The segment at 104–113 (PKQAQEKVSS) is spacer B3. Positions 114–122 (CACSGSGAA) are cys-rich copper-binding 4.

Belongs to the metallothionein superfamily.

It is found in the cytoplasm. Its subcellular location is the cell cortex. Functionally, copper metallothionein that protects the cell against copper toxicity by tightly chelating copper ions. Required for antioxidant-mediated growth rescue in the presence of fluconazole. Acts as a critical factors for lung colonization and virulence. The sequence is that of Copper metallothionein 1 from Cryptococcus neoformans var. grubii serotype A (strain H99 / ATCC 208821 / CBS 10515 / FGSC 9487) (Filobasidiella neoformans var. grubii).